We begin with the raw amino-acid sequence, 192 residues long: Ion-translocating oxidoreductase complex subunit A (192 aa).

The next 6 membrane-spanning stretches (helical) occupy residues 5-25, 39-59, 63-83, 102-122, 134-154, and 171-191; these read ILLIIGTALINNFVLVKFLGL, VGMGLATMFVLTVASLCAYLV, ILIPLNATFLRTLVFILVIAV, LLGIFLPLITTNCAVLGVALL, VVYGFGASLGFSLVLVLFAAL, and AIALITAGLMSLAFMGFTGLV.

It belongs to the NqrDE/RnfAE family. As to quaternary structure, the complex is composed of six subunits: RnfA, RnfB, RnfC, RnfD, RnfE and RnfG.

It is found in the cell inner membrane. In terms of biological role, part of a membrane-bound complex that couples electron transfer with translocation of ions across the membrane. This chain is Ion-translocating oxidoreductase complex subunit A, found in Haemophilus influenzae (strain 86-028NP).